Here is a 180-residue protein sequence, read N- to C-terminus: Der GTPase-activating protein YihI (180 aa).

Disordered regions lie at residues 1–90 (MSRK…QERR) and 145–180 (EPEE…DYKG). Residues 23-32 (NRTESDVEGR) show a composition bias toward basic and acidic residues. A compositionally biased stretch (basic residues) spans 33-43 (LRKRAKKRKGL). 2 stretches are compositionally biased toward basic and acidic residues: residues 50–68 (SDAE…DPRL) and 80–90 (PVKKQTKQERR). Positions 165–180 (DLLADFDDINFDDYKG) are enriched in acidic residues.

This sequence belongs to the YihI family. As to quaternary structure, interacts with Der.

Its function is as follows. A GTPase-activating protein (GAP) that modifies Der/EngA GTPase function. May play a role in ribosome biogenesis. The polypeptide is Der GTPase-activating protein YihI (Vibrio campbellii (strain ATCC BAA-1116)).